The primary structure comprises 238 residues: Ribonuclease PH (238 aa).

Phosphate contacts are provided by residues arginine 86 and 124–126 (GTR).

Belongs to the RNase PH family. In terms of assembly, homohexameric ring arranged as a trimer of dimers.

The catalysed reaction is tRNA(n+1) + phosphate = tRNA(n) + a ribonucleoside 5'-diphosphate. Functionally, phosphorolytic 3'-5' exoribonuclease that plays an important role in tRNA 3'-end maturation. Removes nucleotide residues following the 3'-CCA terminus of tRNAs; can also add nucleotides to the ends of RNA molecules by using nucleoside diphosphates as substrates, but this may not be physiologically important. Probably plays a role in initiation of 16S rRNA degradation (leading to ribosome degradation) during starvation. The protein is Ribonuclease PH of Acinetobacter baumannii (strain AB307-0294).